The sequence spans 167 residues: Leptin (167 aa).

Residues 1-21 (MRCGSLCRFLWLWSCLSYIEA) form the signal peptide. Cysteine 117 and cysteine 167 form a disulfide bridge.

Belongs to the leptin family.

The protein localises to the secreted. In terms of biological role, key player in the regulation of energy balance and body weight control. Once released into the circulation, has central and peripheral effects by binding LEPR, found in many tissues, which results in the activation of several major signaling pathways. In the hypothalamus, acts as an appetite-regulating factor that induces a decrease in food intake and an increase in energy consumption by inducing anorexinogenic factors and suppressing orexigenic neuropeptides, also regulates bone mass and secretion of hypothalamo-pituitary-adrenal hormones. In the periphery, increases basal metabolism, influences reproductive function, regulates pancreatic beta-cell function and insulin secretion, is pro-angiogenic for endothelial cell and affects innate and adaptive immunity. In the arcuate nucleus of the hypothalamus, activates by depolarization POMC neurons inducing FOS and SOCS3 expression to release anorexigenic peptides and inhibits by hyperpolarization NPY neurons inducing SOCS3 with a consequent reduction on release of orexigenic peptides. In addition to its known satiety inducing effect, has a modulatory role in nutrient absorption. In the intestine, reduces glucose absorption by enterocytes by activating PKC and leading to a sequential activation of p38, PI3K and ERK signaling pathways which exerts an inhibitory effect on glucose absorption. Acts as a growth factor on certain tissues, through the activation of different signaling pathways increases expression of genes involved in cell cycle regulation such as CCND1, via JAK2-STAT3 pathway, or VEGFA, via MAPK1/3 and PI3K-AKT1 pathways. May also play an apoptotic role via JAK2-STAT3 pathway and up-regulation of BIRC5 expression. Pro-angiogenic, has mitogenic activity on vascular endothelial cells and plays a role in matrix remodeling by regulating the expression of matrix metalloproteinases (MMPs) and tissue inhibitors of metalloproteinases (TIMPs). In innate immunity, modulates the activity and function of neutrophils by increasing chemotaxis and the secretion of oxygen radicals. Increases phagocytosis by macrophages and enhances secretion of pro-inflammatory mediators. Increases cytotoxic ability of NK cells. Plays a pro-inflammatory role, in synergy with IL1B, by inducing NOS2 which promotes the production of IL6, IL8 and Prostaglandin E2, through a signaling pathway that involves JAK2, PI3K, MAP2K1/MEK1 and MAPK14/p38. In adaptive immunity, promotes the switch of memory T-cells towards T helper-1 cell immune responses. Increases CD4(+)CD25(-) T-cell proliferation and reduces autophagy during TCR (T-cell receptor) stimulation, through MTOR signaling pathway activation and BCL2 up-regulation. The protein is Leptin (LEP) of Phoca vitulina (Harbor seal).